The chain runs to 127 residues: Aspartate 1-decarboxylase (127 aa).

The active-site Schiff-base intermediate with substrate; via pyruvic acid is Ser-25. Ser-25 bears the Pyruvic acid (Ser) mark. Thr-57 is a binding site for substrate. Tyr-58 acts as the Proton donor in catalysis. 73–75 is a substrate binding site; it reads GAA.

This sequence belongs to the PanD family. Heterooctamer of four alpha and four beta subunits. Pyruvate is required as a cofactor. Is synthesized initially as an inactive proenzyme, which is activated by self-cleavage at a specific serine bond to produce a beta-subunit with a hydroxyl group at its C-terminus and an alpha-subunit with a pyruvoyl group at its N-terminus.

Its subcellular location is the cytoplasm. The catalysed reaction is L-aspartate + H(+) = beta-alanine + CO2. Its pathway is cofactor biosynthesis; (R)-pantothenate biosynthesis; beta-alanine from L-aspartate: step 1/1. Catalyzes the pyruvoyl-dependent decarboxylation of aspartate to produce beta-alanine. In Bacillus licheniformis (strain ATCC 14580 / DSM 13 / JCM 2505 / CCUG 7422 / NBRC 12200 / NCIMB 9375 / NCTC 10341 / NRRL NRS-1264 / Gibson 46), this protein is Aspartate 1-decarboxylase.